The primary structure comprises 338 residues: Replication factor C subunit 3 (338 aa).

ATP is bound at residue 57-64 (GPPGTGKT).

It belongs to the activator 1 small subunits family. In terms of assembly, heteropentamer of subunits RFC1, RFC2, RFC3, RFC4 and RFC5 that forms a complex with PCNA in the presence of ATP.

It is found in the nucleus. Functionally, the elongation of primed DNA templates by DNA polymerase delta and epsilon requires the action of the accessory proteins proliferating cell nuclear antigen (PCNA) and activator 1. Subunit 3 binds ATP. In Blastobotrys adeninivorans (Yeast), this protein is Replication factor C subunit 3 (RFC3).